Consider the following 184-residue polypeptide: Autophagy-related protein 101 (184 aa).

It belongs to the ATG101 family. Component of the atg1 kinase complex composed of at least atg1, atg13, atg17 and atg101. Interacts directly with atg13.

The protein resides in the cytoplasm. It localises to the nucleus. The protein localises to the preautophagosomal structure membrane. Its function is as follows. Autophagy factor required for autophagosome formation. Component of the atg1 kinase complex in which it stabilizes atg13. Is also responsible for recruiting downstream factors to the autophagosome-formation site. Has a role in meiosis and sporulation. The polypeptide is Autophagy-related protein 101 (Schizosaccharomyces pombe (strain 972 / ATCC 24843) (Fission yeast)).